A 79-amino-acid chain; its full sequence is MPKRILQGVVVGDKNEKTVVVRVERRFAHPLLQKTVRRSKKYKAHDENNEYKIGDTVSIEECAPISKDKRWTVIAAQGK.

The protein belongs to the universal ribosomal protein uS17 family. As to quaternary structure, part of the 30S ribosomal subunit.

Its function is as follows. One of the primary rRNA binding proteins, it binds specifically to the 5'-end of 16S ribosomal RNA. The polypeptide is Small ribosomal subunit protein uS17 (Rhizobium etli (strain ATCC 51251 / DSM 11541 / JCM 21823 / NBRC 15573 / CFN 42)).